Consider the following 1414-residue polypeptide: Calcium-transporting ATPase 2 (1414 aa).

Disordered regions lie at residues 1-231 and 265-294; these read MSRN…PSRL and AVGT…QWRA. Residues 1–327 are Cytoplasmic-facing; sequence MSRNNPPPVI…LLMWLAFKDK (327 aa). 2 stretches are compositionally biased toward low complexity: residues 33–53 and 75–96; these read PTPT…PESP and SPTP…SSSS. Residues 179–189 show a composition bias toward basic and acidic residues; that stretch reads DGDRGEDDANK. The segment covering 190–201 has biased composition (basic residues); the sequence is KGKKDKKGKKGK. Over residues 202–229 the composition is skewed to basic and acidic residues; that stretch reads KDKEEPPSAHLDPDKDKTDPTPFREKPS. A helical transmembrane segment spans residues 328-348; that stretch reads VLILLSVAAVVSLALGLYQDL. Residues 349–370 are Vacuolar-facing; that stretch reads GTPPKIIYNDECPDGCEEAQVD. Residues 371-391 form a helical membrane-spanning segment; the sequence is WVEGVAIVVAIIIVVLVGSIN. The Cytoplasmic portion of the chain corresponds to 392-541; it reads DWQKERQFKK…TPLQIKLNHL (150 aa). The chain crosses the membrane as a helical span at residues 542–562; sequence AELIAKLGGASGLLLFIALMI. Residues 563–585 are Vacuolar-facing; the sequence is RFFVQLKTNPDRSANDKAQSFIQ. Residues 586–606 traverse the membrane as a helical segment; that stretch reads ILIIAVTLVVVAVPEGLPLAV. 2 residues coordinate Ca(2+): Val595 and Glu600. At 607-1040 the chain is on the cytoplasmic side; sequence TLALAFATKR…GRCVNDSVKK (434 aa). The active-site 4-aspartylphosphate intermediate is Asp642. Mg(2+)-binding residues include Asp642 and Thr644. ATP contacts are provided by residues Thr644, Glu737, Arg779, 909 to 911, Arg958, and Lys964; that span reads TGD. Residue Asp983 participates in Mg(2+) binding. Asn986 is a binding site for ATP. The helical transmembrane segment at 1041-1061 threads the bilayer; the sequence is FLQFQISVNITAVFITFISAV. Ca(2+) is bound at residue Asn1049. At 1062–1068 the chain is on the vacuolar side; it reads ASSSEES. The chain crosses the membrane as a helical span at residues 1069 to 1089; that stretch reads VLTAVQLLWVNLIMDTFAALA. The Ca(2+) site is built by Asn1079 and Asp1083. Over 1090–1118 the chain is Cytoplasmic; sequence LATDPATESSLDRKPDRKNAPLITVEMFK. A helical transmembrane segment spans residues 1119–1139; that stretch reads MIMVQAIYQIIVCLVLHFAGL. At 1140–1153 the chain is on the vacuolar side; sequence KILGLEDNDQNNTE. A helical membrane pass occupies residues 1154 to 1171; that stretch reads LGALVFNCFVFCQIFNQL. Topologically, residues 1172–1191 are cytoplasmic; the sequence is NCRRLDRKLNVLEGFWRNWY. A helical transmembrane segment spans residues 1192–1212; it reads FIIIFLIMVGGQILIVEVGGA. Position 1208 (Glu1208) interacts with Ca(2+). Residues 1213-1223 lie on the Vacuolar side of the membrane; it reads AFQVTRLGGRD. Residues 1224 to 1244 traverse the membrane as a helical segment; that stretch reads WGITLVIGALSLPIGALVRLT. Topologically, residues 1245–1414 are cytoplasmic; the sequence is PTGPFARLLV…GLSSGDANNV (170 aa). Residues 1376-1414 are disordered; it reads PRTNPDDPLYAKFGLQPPESRGSSVSGAEGLSSGDANNV.

Belongs to the cation transport ATPase (P-type) (TC 3.A.3) family.

It localises to the vacuole membrane. The catalysed reaction is Ca(2+)(in) + ATP + H2O = Ca(2+)(out) + ADP + phosphate + H(+). Functionally, this magnesium-dependent enzyme catalyzes the hydrolysis of ATP coupled with the transport of calcium. Transports calcium to the vacuole and participates in the control of cytosolic free calcium. The chain is Calcium-transporting ATPase 2 from Cryptococcus neoformans var. grubii serotype A (strain H99 / ATCC 208821 / CBS 10515 / FGSC 9487) (Filobasidiella neoformans var. grubii).